Here is an 838-residue protein sequence, read N- to C-terminus: Serine/threonine-protein phosphatase 4 regulatory subunit 3 (838 aa).

Disordered stretches follow at residues 452–482 and 745–838; these read NNCNGNSAVKAGESNGAESPIAPPGSRSPSR and AINK…SESS. The segment covering 747–761 has biased composition (polar residues); that stretch reads NKQQDNNGERNTTTG. Positions 783–792 are enriched in acidic residues; that stretch reads SDGENNENNE.

As to quaternary structure, regulatory subunit 3 (R3) of the histone H2A phosphatase complex (HTP-C) consisting of PPH3, PSY2 and PSY4.

The protein resides in the nucleus. Its function is as follows. Core regulatory subunit of the histone H2A phosphatase complex, which dephosphorylates H2AS128ph (gamma-H2A) that has been displaced from sites of DNA lesions in the double-stranded DNA break repair process. Dephosphorylation is necessary for efficient recovery from the DNA damage checkpoint. In Eremothecium gossypii (strain ATCC 10895 / CBS 109.51 / FGSC 9923 / NRRL Y-1056) (Yeast), this protein is Serine/threonine-protein phosphatase 4 regulatory subunit 3 (PSY2).